The following is a 182-amino-acid chain: Ribosome-recycling factor (182 aa).

This sequence belongs to the RRF family.

The protein localises to the cytoplasm. Responsible for the release of ribosomes from messenger RNA at the termination of protein biosynthesis. May increase the efficiency of translation by recycling ribosomes from one round of translation to another. The sequence is that of Ribosome-recycling factor from Prochlorococcus marinus (strain MIT 9312).